Reading from the N-terminus, the 307-residue chain is OTU domain-containing protein 2 (307 aa).

2 disordered regions span residues 23–46 (ENKD…RKEV) and 96–130 (SRDE…AKRD). Positions 103–114 (QNVPVQQQQQGQ) are enriched in low complexity. An OTU domain is found at 167-307 (LKQFDIQPDG…GEHYNSLHDS (141 aa)).

This is OTU domain-containing protein 2 (OTU2) from Saccharomyces cerevisiae (strain ATCC 204508 / S288c) (Baker's yeast).